Consider the following 98-residue polypeptide: uncharacterized protein (98 aa).

This is an uncharacterized protein from Methanocaldococcus jannaschii (strain ATCC 43067 / DSM 2661 / JAL-1 / JCM 10045 / NBRC 100440) (Methanococcus jannaschii).